The primary structure comprises 485 residues: UDP-N-acetylmuramoyl-L-alanyl-D-glutamate--2,6-diaminopimelate ligase (485 aa).

UDP-N-acetyl-alpha-D-muramoyl-L-alanyl-D-glutamate is bound by residues Leu27 and Ser29. 106–112 provides a ligand contact to ATP; it reads GTSGKTS. UDP-N-acetyl-alpha-D-muramoyl-L-alanyl-D-glutamate contacts are provided by residues 148–149, Ser175, Gln181, and Arg183; that span reads TT. Lys215 carries the N6-carboxylysine modification. Meso-2,6-diaminopimelate-binding positions include Arg382, 406 to 409, Gly454, and Glu458; that span reads DNPR. The short motif at 406–409 is the Meso-diaminopimelate recognition motif element; it reads DNPR.

The protein belongs to the MurCDEF family. MurE subfamily. Mg(2+) is required as a cofactor. Carboxylation is probably crucial for Mg(2+) binding and, consequently, for the gamma-phosphate positioning of ATP.

The protein resides in the cytoplasm. The catalysed reaction is UDP-N-acetyl-alpha-D-muramoyl-L-alanyl-D-glutamate + meso-2,6-diaminopimelate + ATP = UDP-N-acetyl-alpha-D-muramoyl-L-alanyl-gamma-D-glutamyl-meso-2,6-diaminopimelate + ADP + phosphate + H(+). Its pathway is cell wall biogenesis; peptidoglycan biosynthesis. Catalyzes the addition of meso-diaminopimelic acid to the nucleotide precursor UDP-N-acetylmuramoyl-L-alanyl-D-glutamate (UMAG) in the biosynthesis of bacterial cell-wall peptidoglycan. The polypeptide is UDP-N-acetylmuramoyl-L-alanyl-D-glutamate--2,6-diaminopimelate ligase (Bradyrhizobium diazoefficiens (strain JCM 10833 / BCRC 13528 / IAM 13628 / NBRC 14792 / USDA 110)).